The primary structure comprises 280 residues: Endochitinase A (280 aa).

An N-terminal signal peptide occupies residues Met-1 to Ala-25. One can recognise a Chitin-binding type-1 domain in the interval Gln-26–Ser-60. Disulfide bonds link Cys-28/Cys-36, Cys-30/Cys-42, Cys-35/Cys-49, and Cys-53/Cys-58. A hinge region (poly-Gly) region spans residues Gly-61–Gly-77. The tract at residues Ala-78 to Cys-280 is catalytic. Cys-100 and Cys-149 are disulfide-bonded. Glu-144 serves as the catalytic Proton donor. Asn-155 carries N-linked (GlcNAc...) asparagine glycosylation. 2 cysteine pairs are disulfide-bonded: Cys-161-Cys-170 and Cys-248-Cys-280. Residue Asn-277 is glycosylated (N-linked (GlcNAc...) asparagine).

Belongs to the glycosyl hydrolase 19 family. Chitinase class IV subfamily.

Its subcellular location is the secreted. It carries out the reaction Random endo-hydrolysis of N-acetyl-beta-D-glucosaminide (1-&gt;4)-beta-linkages in chitin and chitodextrins.. Inactivated by l-ethyl-3-(3-dimethylaminopropyl)carbodiimide (EDC) in the absence of exogenous nucleophiles (e.g. GlcNAc4, GlcNAc3 and GlcNAc2). Not inhibited by tetra-N-acetylchitopentaose or modified chitotetraose substrate TMG-chitotriomycin-pMP, containing a free, non-acetylated glucosaminyl residue or a N-trimethylamino glucosamine (TMG) residue at the non-reducing terminus, respectively. Defense against chitin-containing fungal pathogens. Hydrolyzes glycol chitin and tetra-N-acetylchitotetraose in vitro. Its action is countered by fungal polyglycine hydrolases and fungalysin, that cleave the chitin-binding domain from the protein. This Zea mays (Maize) protein is Endochitinase A.